The chain runs to 95 residues: Ribonuclease kappa (95 aa).

2 helical membrane passes run 12–32 and 68–88; these read GLII…FFYI and CWIA…QFYM.

The protein belongs to the RNase K family.

Its subcellular location is the membrane. In terms of biological role, endoribonuclease. Its function is as follows. (Microbial infection) Required for the initial stages of clathrin-mediated endocytic uptake of a diverse set of flaviviruses, including dengue and West Nile. Not required for clathrin-mediated endocytosis and macropinocytosis. The polypeptide is Ribonuclease kappa (Drosophila melanogaster (Fruit fly)).